Reading from the N-terminus, the 421-residue chain is D-amino acid dehydrogenase (421 aa).

An FAD-binding site is contributed by 3 to 17 (VIVLGSGVIGVASAY).

This sequence belongs to the DadA oxidoreductase family. The cofactor is FAD.

It catalyses the reaction a D-alpha-amino acid + A + H2O = a 2-oxocarboxylate + AH2 + NH4(+). Its pathway is amino-acid degradation; D-alanine degradation; NH(3) and pyruvate from D-alanine: step 1/1. Oxidative deamination of D-amino acids. This Acinetobacter baumannii (strain ATCC 17978 / DSM 105126 / CIP 53.77 / LMG 1025 / NCDC KC755 / 5377) protein is D-amino acid dehydrogenase.